The following is a 323-amino-acid chain: Isoeugenol synthase 1 (323 aa).

Residues Thr-14–Leu-17, Val-36–Lys-47, Val-88–Gln-90, Ser-113–Phe-115, Lys-135, and Asn-155–Leu-157 contribute to the NADP(+) site. The Proton donor/acceptor role is filled by Lys-135.

The protein belongs to the NmrA-type oxidoreductase family. Expressed in flowers, especially in corolla and tubes of petals, probably in both epidermal and mesophyll cell layers.

The enzyme catalyses (E)-isoeugenol + acetate + NADP(+) = (E)-coniferyl acetate + NADPH. Its pathway is aromatic compound metabolism; phenylpropanoid biosynthesis. Its activity is regulated as follows. Inhibited by zinc and copper ions. Repressed by 4-bromo-cinnamyl acetate. In terms of biological role, involved in the biosynthesis of the floral volatile isoeugenol. Catalyzes the synthesis of the phenylpropene isoeugenol from coniferyl acetate. Phenylpropenes are the primary constituents of various essential plant oils. They are produced as antimicrobial and antianimal compounds, or as floral attractants of pollinators. Isoeugenol is a characteristic aromatic constituent of spices and a floral volatile compound. The polypeptide is Isoeugenol synthase 1 (Petunia hybrida (Petunia)).